We begin with the raw amino-acid sequence, 144 residues long: 3-dehydroquinate dehydratase (144 aa).

Catalysis depends on tyrosine 22, which acts as the Proton acceptor. Positions 71, 77, and 84 each coordinate substrate. Histidine 97 functions as the Proton donor in the catalytic mechanism. Residues 98–99 (IS) and arginine 108 contribute to the substrate site.

It belongs to the type-II 3-dehydroquinase family. As to quaternary structure, homododecamer.

The enzyme catalyses 3-dehydroquinate = 3-dehydroshikimate + H2O. It functions in the pathway metabolic intermediate biosynthesis; chorismate biosynthesis; chorismate from D-erythrose 4-phosphate and phosphoenolpyruvate: step 3/7. Catalyzes a trans-dehydration via an enolate intermediate. This chain is 3-dehydroquinate dehydratase, found in Thermotoga petrophila (strain ATCC BAA-488 / DSM 13995 / JCM 10881 / RKU-1).